We begin with the raw amino-acid sequence, 346 residues long: Annexin A1 (346 aa).

The residue at position 2 (A2) is an N-acetylalanine. A Phosphoserine; by TRPM7 modification is found at S5. An Isoglutamyl lysine isopeptide (Gln-Lys) (interchain with K-?) cross-link involves residue Q19. Y21 carries the post-translational modification Phosphotyrosine; by EGFR. Position 27 is a phosphoserine; by PKC (S27). Residues S34 and S37 each carry the phosphoserine modification. T41 carries the post-translational modification Phosphothreonine. 4 Annexin repeats span residues 42-113, 114-185, 197-269, and 273-344; these read FNPS…ALLK, TPAQ…SLAK, DLAD…AIVK, and SKPA…ALCG. K58 carries the N6-acetyllysine modification. Ca(2+) is bound by residues G59, V60, E62, K97, L100, E105, M127, G129, G131, T132, and E134. A Phosphothreonine modification is found at T136. Residues D171, G210, and R213 each coordinate Ca(2+). Residue K214 forms a Glycyl lysine isopeptide (Lys-Gly) (interchain with G-Cter in SUMO1); alternate linkage. A Glycyl lysine isopeptide (Lys-Gly) (interchain with G-Cter in SUMO2); alternate cross-link involves residue K214. G215 contributes to the Ca(2+) binding site. K239 carries the post-translational modification N6-acetyllysine. Residues D253, E255, and L256 each coordinate Ca(2+). A Glycyl lysine isopeptide (Lys-Gly) (interchain with G-Cter in SUMO1) cross-link involves residue K257. Positions 261, 286, 288, and 290 each coordinate Ca(2+). The residue at position 312 (K312) is an N6-acetyllysine. An intrachain disulfide couples C324 to C343. Residues L328, E330, and T331 each contribute to the Ca(2+) site. K332 participates in a covalent cross-link: Glycyl lysine isopeptide (Lys-Gly) (interchain with G-Cter in SUMO1). A Ca(2+)-binding site is contributed by E336.

The protein belongs to the annexin family. As to quaternary structure, homodimer; non-covalently linked. Homodimer; linked by transglutamylation. Homodimers linked by transglutamylation are observed in placenta, but not in other tissues. Interacts with S100A11. Heterotetramer, formed by two molecules each of S100A11 and ANXA1. Interacts with DYSF. Interacts with EGFR. In terms of processing, phosphorylated by protein kinase C, EGFR and TRPM7. Phosphorylated in response to EGF treatment. Post-translationally, sumoylated. Proteolytically cleaved by cathepsin CTSG to release the active N-terminal peptide Ac2-26.

It localises to the nucleus. The protein localises to the cytoplasm. The protein resides in the cell projection. Its subcellular location is the cilium. It is found in the basolateral cell membrane. It localises to the lateral cell membrane. The protein localises to the cell membrane. The protein resides in the apical cell membrane. Its subcellular location is the membrane. It is found in the early endosome. It localises to the cytoplasmic vesicle membrane. The protein localises to the endosome membrane. The protein resides in the secreted. Its subcellular location is the extracellular space. It is found in the extracellular exosome. It localises to the cytoplasmic vesicle. The protein localises to the secretory vesicle lumen. The protein resides in the phagocytic cup. Functionally, plays important roles in the innate immune response as effector of glucocorticoid-mediated responses and regulator of the inflammatory process. Has anti-inflammatory activity. Plays a role in glucocorticoid-mediated down-regulation of the early phase of the inflammatory response. Contributes to the adaptive immune response by enhancing signaling cascades that are triggered by T-cell activation, regulates differentiation and proliferation of activated T-cells. Promotes the differentiation of T-cells into Th1 cells and negatively regulates differentiation into Th2 cells. Has no effect on unstimulated T-cells. Negatively regulates hormone exocytosis via activation of the formyl peptide receptors and reorganization of the actin cytoskeleton. Has high affinity for Ca(2+) and can bind up to eight Ca(2+) ions. Displays Ca(2+)-dependent binding to phospholipid membranes. Plays a role in the formation of phagocytic cups and phagosomes. Plays a role in phagocytosis by mediating the Ca(2+)-dependent interaction between phagosomes and the actin cytoskeleton. In terms of biological role, functions at least in part by activating the formyl peptide receptors and downstream signaling cascades. Promotes chemotaxis of granulocytes and monocytes via activation of the formyl peptide receptors. Promotes rearrangement of the actin cytoskeleton, cell polarization and cell migration. Promotes resolution of inflammation and wound healing. Acts via neutrophil N-formyl peptide receptors to enhance the release of CXCL2. The chain is Annexin A1 (ANXA1) from Pan troglodytes (Chimpanzee).